Here is a 286-residue protein sequence, read N- to C-terminus: Bifunctional protein FolD (286 aa).

Residues 165 to 167 and S190 each bind NADP(+); that span reads GRS.

Belongs to the tetrahydrofolate dehydrogenase/cyclohydrolase family. As to quaternary structure, homodimer.

It catalyses the reaction (6R)-5,10-methylene-5,6,7,8-tetrahydrofolate + NADP(+) = (6R)-5,10-methenyltetrahydrofolate + NADPH. It carries out the reaction (6R)-5,10-methenyltetrahydrofolate + H2O = (6R)-10-formyltetrahydrofolate + H(+). Its pathway is one-carbon metabolism; tetrahydrofolate interconversion. Functionally, catalyzes the oxidation of 5,10-methylenetetrahydrofolate to 5,10-methenyltetrahydrofolate and then the hydrolysis of 5,10-methenyltetrahydrofolate to 10-formyltetrahydrofolate. The polypeptide is Bifunctional protein FolD (Staphylococcus epidermidis (strain ATCC 35984 / DSM 28319 / BCRC 17069 / CCUG 31568 / BM 3577 / RP62A)).